An 85-amino-acid polypeptide reads, in one-letter code: Large ribosomal subunit protein bL27 (85 aa).

It belongs to the bacterial ribosomal protein bL27 family.

The protein is Large ribosomal subunit protein bL27 of Vesicomyosocius okutanii subsp. Calyptogena okutanii (strain HA).